A 491-amino-acid chain; its full sequence is FAD-dependent monooxygenase idtM (491 aa).

Residues Glu-34, Gly-48, Arg-107, Asp-307, and Ala-320 each contribute to the FAD site. A helical membrane pass occupies residues 448-468; sequence ILSLVYVVAGLAMMYMSIYLV.

This sequence belongs to the paxM FAD-dependent monooxygenase family. It depends on FAD as a cofactor.

The protein localises to the membrane. It functions in the pathway secondary metabolite biosynthesis. Functionally, FAD-dependent monooxygenase; part of the gene cluster that mediates the biosynthesis of paspalitrems, indole-diterpene (IDT) mycotoxins that are potent tremorgens in mammals. The geranylgeranyl diphosphate (GGPP) synthase idtG is proposed to catalyze the first step in IDT biosynthesis via catalysis of a series of iterative condensations of isopentenyl diphosphate (IPP) with dimethylallyl diphosphate (DMAPP), geranyl diphosphate (GPP), and farnesyl diphosphate (FPP), to form GGPP. Condensation of indole-3-glycerol phosphate with GGPP by the prenyltransferase idtC then forms 3-geranylgeranylindole (3-GGI). Epoxidation of the two terminal alkenes of the geranylgeranyl moiety by the FAD-dependent monooxygenase idtM, and cyclization by the terpene cyclase idtB then leads to the production of paspaline. The cytochrome P450 monooxygenase idtP then catalyzes oxidative elimination of the pendant methyl group at C-12 of paspaline and generates the C-10 ketone to yield 13-desoxypaxilline. The cytochrome P450 monooxygenase idtQ may catalyze the C-13 oxidation of 13-desoxypaxilline to afford paxilline. Considering that both paspalicine and paxilline were detected in C.paspali, idtQ also catalyzes the formation of paspalinine from 13-desoxypaxilline via paspalicine as an intermediate. Finally, the alpha-prenyltransferase idtF prenylates paspalinine at the C-20 or the C-21 positions to yield paspalitrems A and C, respectively. The hydroxylation of paspalitrem A at C-32 by a still unknown oxidase affords paspalitrem B. This chain is FAD-dependent monooxygenase idtM, found in Claviceps paspali (Rye ergot fungus).